The primary structure comprises 187 residues: MTNKCLLQIALLLCFSTTALSMSYNLLGFLQRSSNFQCQKLLWQLNGRLEYCLKDRMNFDIPEEIKQLQQFQKEDAALTIYEMLQNIFAIFRQDSSSTGWNETIVENLLANVYHQINHLKTVLEEKLEKEDFTRGKLMSSLHLKRYYGRILHYLKAKEYSHCAWTIVRVEILRNFYFINRLTGYLRN.

Positions 1–21 (MTNKCLLQIALLLCFSTTALS) are cleaved as a signal peptide. Tyr24 is subject to Phosphotyrosine. Cys52 and Cys162 are oxidised to a cystine. N-linked (GlcNAc...) asparagine glycosylation is present at Asn101.

It belongs to the alpha/beta interferon family. As to quaternary structure, monomer.

It localises to the secreted. Type I interferon cytokine that plays a key role in the innate immune response to infection, developing tumors and other inflammatory stimuli. Signals via binding to high-affinity (IFNAR2) and low-affinity (IFNAR1) heterodimeric receptor, activating the canonical Jak-STAT signaling pathway resulting in transcriptional activation or repression of interferon-regulated genes that encode the effectors of the interferon response, such as antiviral proteins, regulators of cell proliferation and differentiation, and immunoregulatory proteins. Signals mostly via binding to a IFNAR1-IFNAR2 heterodimeric receptor, but can also function with IFNAR1 alone and independently of Jak-STAT pathways. Elicits a wide variety of responses, including antiviral and antibacterial activities, and can regulate the development of B-cells, myelopoiesis and lipopolysaccharide (LPS)-inducible production of tumor necrosis factor. Plays a role in neuronal homeostasis by regulating dopamine turnover and protecting dopaminergic neurons: acts by promoting neuronal autophagy and alpha-synuclein clearance, thereby preventing dopaminergic neuron loss. IFNB1 is more potent than interferon-alpha (IFN-alpha) in inducing the apoptotic and antiproliferative pathways required for control of tumor cell growth. In Homo sapiens (Human), this protein is Interferon beta.